Reading from the N-terminus, the 212-residue chain is Pyridoxine/pyridoxamine 5'-phosphate oxidase (212 aa).

Residues 7–10 (RRQY) and Lys65 contribute to the substrate site. FMN-binding positions include 60 to 65 (RIVLLK), 75 to 76 (FT), Arg81, Lys82, and Gln104. 3 residues coordinate substrate: Tyr122, Arg126, and Ser130. Residues 139–140 (QS) and Trp184 contribute to the FMN site. 190–192 (RLH) provides a ligand contact to substrate. Arg194 is a binding site for FMN.

Belongs to the pyridoxamine 5'-phosphate oxidase family. In terms of assembly, homodimer. The cofactor is FMN.

The catalysed reaction is pyridoxamine 5'-phosphate + O2 + H2O = pyridoxal 5'-phosphate + H2O2 + NH4(+). It carries out the reaction pyridoxine 5'-phosphate + O2 = pyridoxal 5'-phosphate + H2O2. Its pathway is cofactor metabolism; pyridoxal 5'-phosphate salvage; pyridoxal 5'-phosphate from pyridoxamine 5'-phosphate: step 1/1. The protein operates within cofactor metabolism; pyridoxal 5'-phosphate salvage; pyridoxal 5'-phosphate from pyridoxine 5'-phosphate: step 1/1. Functionally, catalyzes the oxidation of either pyridoxine 5'-phosphate (PNP) or pyridoxamine 5'-phosphate (PMP) into pyridoxal 5'-phosphate (PLP). The protein is Pyridoxine/pyridoxamine 5'-phosphate oxidase of Alteromonas mediterranea (strain DSM 17117 / CIP 110805 / LMG 28347 / Deep ecotype).